The sequence spans 406 residues: Accessory Sec system protein translocase subunit SecY2 (406 aa).

10 helical membrane-spanning segments follow: residues 14–34 (SWTVLFLFIYVLGSHLVLPFI), 63–83 (FSLFSVGLSPWMSAMILWQMF), 108–128 (FAIALIQSLAVSLSLPIEVGI), 131–151 (GLAILTNTILLIAGTFFLVWL), 156–176 (SFFGIGGSIVILMASMVANLP), 190–210 (LPIILSLIIMGLLFLYIAVIV), 246–266 (FMYAISLVSIPQYLLILIQIL), 285–305 (PIWLVLYQVVLFVLGIAFAFV), 344–364 (AVIGAIYTVIMAGGPMMIVLI), and 368–388 (YLQLSMIPGMFLIYSGMVYNV).

Belongs to the SecY/SEC61-alpha family. SecY2 subfamily. In terms of assembly, component of the accessory SecA2/SecY2 protein translocase complex required to export cell wall proteins. May form heterotrimers with SecE and SecG subunits.

It is found in the cell membrane. Its function is as follows. Part of the accessory SecA2/SecY2 system specifically required for export of possible cell wall proteins. The central subunit of a protein translocation channel. The sequence is that of Accessory Sec system protein translocase subunit SecY2 from Streptococcus salivarius (strain CCHSS3).